Consider the following 407-residue polypeptide: Lysophospholipid transporter LplT (407 aa).

11 helical membrane passes run 18 to 38, 53 to 73, 91 to 111, 139 to 159, 163 to 183, 229 to 249, 257 to 277, 286 to 306, 310 to 330, 343 to 365, and 375 to 395; these read AVII…FATL, FLQM…GQIA, AGAL…LVGV, LMEA…GVLA, IYGA…ANML, WGAG…ALGI, LLNA…AKLV, LPAG…HNLM, SLLI…NALL, AIAV…YSLV, and IGIG…VWLI.

Belongs to the major facilitator superfamily. LplT (TC 2.A.1.42) family.

The protein resides in the cell inner membrane. Catalyzes the facilitated diffusion of 2-acyl-glycero-3-phosphoethanolamine (2-acyl-GPE) into the cell. The protein is Lysophospholipid transporter LplT of Pectobacterium carotovorum subsp. carotovorum (strain PC1).